Reading from the N-terminus, the 426-residue chain is Enolase (426 aa).

Glutamine 163 serves as a coordination point for (2R)-2-phosphoglycerate. The active-site Proton donor is the glutamate 205. The Mg(2+) site is built by aspartate 242, glutamate 285, and aspartate 312. (2R)-2-phosphoglycerate-binding residues include lysine 337, arginine 366, serine 367, and lysine 388. Lysine 337 (proton acceptor) is an active-site residue.

The protein belongs to the enolase family. Mg(2+) serves as cofactor.

It is found in the cytoplasm. The protein resides in the secreted. It localises to the cell surface. The catalysed reaction is (2R)-2-phosphoglycerate = phosphoenolpyruvate + H2O. It functions in the pathway carbohydrate degradation; glycolysis; pyruvate from D-glyceraldehyde 3-phosphate: step 4/5. In terms of biological role, catalyzes the reversible conversion of 2-phosphoglycerate (2-PG) into phosphoenolpyruvate (PEP). It is essential for the degradation of carbohydrates via glycolysis. In Gluconacetobacter diazotrophicus (strain ATCC 49037 / DSM 5601 / CCUG 37298 / CIP 103539 / LMG 7603 / PAl5), this protein is Enolase.